Consider the following 426-residue polypeptide: Glucan 1,3-beta-glucosidase (426 aa).

The first 20 residues, 1 to 20, serve as a signal peptide directing secretion; sequence MLYPRALLPAAVALASLVLA. The active-site Proton donor is the E208. Disulfide bonds link C290–C416 and C315–C343. The active-site Nucleophile is E307.

Belongs to the glycosyl hydrolase 5 (cellulase A) family.

Its subcellular location is the secreted. The catalysed reaction is Successive hydrolysis of beta-D-glucose units from the non-reducing ends of (1-&gt;3)-beta-D-glucans, releasing alpha-glucose.. Its function is as follows. Beta-glucanases participate in the metabolism of beta-glucan, the main structural component of the cell wall. It could also function biosynthetically as a transglycosylase. The sequence is that of Glucan 1,3-beta-glucosidase from Blumeria graminis (Powdery mildew).